Reading from the N-terminus, the 323-residue chain is 4-hydroxy-3-methylbut-2-enyl diphosphate reductase (323 aa).

Cys-21 lines the [4Fe-4S] cluster pocket. Residues His-50 and His-83 each coordinate (2E)-4-hydroxy-3-methylbut-2-enyl diphosphate. Residues His-50 and His-83 each coordinate dimethylallyl diphosphate. 2 residues coordinate isopentenyl diphosphate: His-50 and His-83. Cys-105 contacts [4Fe-4S] cluster. His-133 contacts (2E)-4-hydroxy-3-methylbut-2-enyl diphosphate. Residue His-133 coordinates dimethylallyl diphosphate. Residue His-133 coordinates isopentenyl diphosphate. The active-site Proton donor is the Glu-135. (2E)-4-hydroxy-3-methylbut-2-enyl diphosphate is bound at residue Thr-173. Cys-203 is a [4Fe-4S] cluster binding site. (2E)-4-hydroxy-3-methylbut-2-enyl diphosphate contacts are provided by Ser-231, Ser-232, Asn-233, and Ser-276. Ser-231, Ser-232, Asn-233, and Ser-276 together coordinate dimethylallyl diphosphate. Isopentenyl diphosphate-binding residues include Ser-231, Ser-232, Asn-233, and Ser-276.

The protein belongs to the IspH family. Requires [4Fe-4S] cluster as cofactor.

It carries out the reaction isopentenyl diphosphate + 2 oxidized [2Fe-2S]-[ferredoxin] + H2O = (2E)-4-hydroxy-3-methylbut-2-enyl diphosphate + 2 reduced [2Fe-2S]-[ferredoxin] + 2 H(+). The catalysed reaction is dimethylallyl diphosphate + 2 oxidized [2Fe-2S]-[ferredoxin] + H2O = (2E)-4-hydroxy-3-methylbut-2-enyl diphosphate + 2 reduced [2Fe-2S]-[ferredoxin] + 2 H(+). The protein operates within isoprenoid biosynthesis; dimethylallyl diphosphate biosynthesis; dimethylallyl diphosphate from (2E)-4-hydroxy-3-methylbutenyl diphosphate: step 1/1. It functions in the pathway isoprenoid biosynthesis; isopentenyl diphosphate biosynthesis via DXP pathway; isopentenyl diphosphate from 1-deoxy-D-xylulose 5-phosphate: step 6/6. Functionally, catalyzes the conversion of 1-hydroxy-2-methyl-2-(E)-butenyl 4-diphosphate (HMBPP) into a mixture of isopentenyl diphosphate (IPP) and dimethylallyl diphosphate (DMAPP). Acts in the terminal step of the DOXP/MEP pathway for isoprenoid precursor biosynthesis. In Cutibacterium acnes (strain DSM 16379 / KPA171202) (Propionibacterium acnes), this protein is 4-hydroxy-3-methylbut-2-enyl diphosphate reductase.